Reading from the N-terminus, the 411-residue chain is Lissencephaly-1 homolog (411 aa).

The LisH domain maps to 9-41 (QREELNQAIADYLGSNGYADSLETFRKEADLST). Residues 56–83 (TSVIRLQKKVMELEAKLTEAEKEVIEGA) are a coiled coil. WD repeat units follow at residues 106 to 147 (GHRA…RSLK), 148 to 187 (GHTD…ECIK), 191 to 230 (GHDH…CVKT), 233 to 272 (GHRE…CKVE), 275 to 334 (DHEH…CLLT), 337 to 376 (GHDN…CMKT), and 379 to 411 (AHQH…WECR).

The protein belongs to the WD repeat LIS1/nudF family.

Its subcellular location is the cytoplasm. The protein localises to the cytoskeleton. It localises to the microtubule organizing center. It is found in the centrosome. Its function is as follows. Positively regulates the activity of the minus-end directed microtubule motor protein dynein. May enhance dynein-mediated microtubule sliding by targeting dynein to the microtubule plus end. Required for several dynein- and microtubule-dependent processes. This is Lissencephaly-1 homolog from Drosophila sechellia (Fruit fly).